We begin with the raw amino-acid sequence, 53 residues long: Conotoxin Cal9.2f (53 aa).

The propeptide occupies 1-6; sequence KKGVTL. Disulfide bonds link cysteine 15-cysteine 32, cysteine 20-cysteine 42, and cysteine 22-cysteine 47.

As to expression, expressed by the venom duct.

It is found in the secreted. Probable neurotoxin with unknown target. Possibly targets ion channels. The chain is Conotoxin Cal9.2f from Californiconus californicus (California cone).